The chain runs to 166 residues: Transcriptional repressor NrdR (166 aa).

A zinc finger spans residues 3–34; that stretch reads CPFCRNPDSRVVDSRMADDGSSIRRRRQCPEC. The ATP-cone domain maps to 46 to 136; it reads LSVIKRSGVG…VYQAFESLED (91 aa).

It belongs to the NrdR family. Zn(2+) serves as cofactor.

Functionally, negatively regulates transcription of bacterial ribonucleotide reductase nrd genes and operons by binding to NrdR-boxes. In Paenarthrobacter aurescens (strain TC1), this protein is Transcriptional repressor NrdR.